The following is an 82-amino-acid chain: Delta-conotoxin-like CnVIA (82 aa).

Positions 1–22 (MKLTCMMIVAVLFLTAWTFVTA) are cleaved as a signal peptide. Positions 23-49 (DDSRNGLENLSPKARHEMKNPEASKSN) are excised as a propeptide. 3 disulfides stabilise this stretch: Cys-54–Cys-69, Cys-61–Cys-73, and Cys-68–Cys-78.

This sequence belongs to the conotoxin O1 superfamily. Expressed by the venom duct.

It localises to the secreted. Functionally, delta-conotoxins bind to site 6 of voltage-gated sodium channels (Nav) and inhibit the inactivation process. In Conus consors (Singed cone), this protein is Delta-conotoxin-like CnVIA.